We begin with the raw amino-acid sequence, 358 residues long: Ganglioside-induced differentiation-associated protein 1 (358 aa).

One can recognise a GST N-terminal domain in the interval 24 to 105 (VKLILYHWTH…YLEQTFLDEK (82 aa)). Glycyl lysine isopeptide (Lys-Gly) (interchain with G-Cter in ubiquitin) cross-links involve residues K50, K172, K173, K188, and K190. Residues 153–309 (PAYATTRIRS…LISAVLPTAF (157 aa)) form the GST C-terminal domain. K203 is subject to N6-acetyllysine; alternate. K203 is covalently cross-linked (Glycyl lysine isopeptide (Lys-Gly) (interchain with G-Cter in ubiquitin); alternate). Glycyl lysine isopeptide (Lys-Gly) (interchain with G-Cter in ubiquitin) cross-links involve residues K206, K207, and K214. The next 2 membrane-spanning stretches (helical) occupy residues 292 to 312 (VLGHVNNILISAVLPTAFRVA) and 320 to 340 (LGTTLVVGLLAGMGYFAFMLF). The tract at residues 320–358 (LGTTLVVGLLAGMGYFAFMLFRKRLGSMILALRPRPNYF) is required for mitochondrial localization.

This sequence belongs to the GST superfamily. As to quaternary structure, homodimer. In terms of processing, ubiquitinated by PRKN during mitophagy, leading to its degradation and enhancement of mitophagy. Deubiquitinated by USP30.

Its subcellular location is the mitochondrion outer membrane. The protein resides in the cytoplasm. Functionally, regulates the mitochondrial network by promoting mitochondrial fission. This is Ganglioside-induced differentiation-associated protein 1 (GDAP1) from Bos taurus (Bovine).